Reading from the N-terminus, the 173-residue chain is Zinc finger A20 and AN1 domain-containing stress-associated protein 2 (173 aa).

Residues 12-46 (PEGPKLCTNNCGFFGSAATMNMCSKCHKDMLFQQE) form an A20-type zinc finger. Zn(2+) contacts are provided by cysteine 18, cysteine 22, cysteine 34, cysteine 37, cysteine 114, cysteine 117, cysteine 128, cysteine 130, cysteine 135, histidine 138, histidine 144, and cysteine 146. The AN1-type zinc finger occupies 108–154 (PKGPSRCTTCNKRVGLTGFKCRCGSLFCGTHRYADVHDCSFNYHAAA).

May be involved in environmental stress response. This Arabidopsis thaliana (Mouse-ear cress) protein is Zinc finger A20 and AN1 domain-containing stress-associated protein 2 (SAP2).